The primary structure comprises 103 residues: Histone H4 (103 aa).

Residues 1 to 14 (MSGRGKGGKGLGKG) show a composition bias toward gly residues. Residues 1–20 (MSGRGKGGKGLGKGGAKRHR) form a disordered region. At lysine 6 the chain carries N6-acetyl-N6-methyllysine; alternate. 3 positions are modified to N6-methyllysine; alternate: lysine 6, lysine 9, and lysine 13. Lysine 13 carries the N6-acetyl-N6-methyllysine; alternate modification. A DNA-binding region spans residues 17-21 (KRHRK). At lysine 92 the chain carries N6-glutaryllysine.

It belongs to the histone H4 family. In terms of assembly, the nucleosome is a histone octamer containing two molecules each of H2A, H2B, H3 and H4 assembled in one H3-H4 heterotetramer and two H2A-H2B heterodimers. The octamer wraps approximately 147 bp of DNA. In terms of processing, glutarylation at Lys-92 (H4K91glu) destabilizes nucleosomes by promoting dissociation of the H2A-H2B dimers from nucleosomes.

Its subcellular location is the nucleus. It is found in the chromosome. Core component of nucleosome. Nucleosomes wrap and compact DNA into chromatin, limiting DNA accessibility to the cellular machineries which require DNA as a template. Histones thereby play a central role in transcription regulation, DNA repair, DNA replication and chromosomal stability. DNA accessibility is regulated via a complex set of post-translational modifications of histones, also called histone code, and nucleosome remodeling. This Mycosarcoma maydis (Corn smut fungus) protein is Histone H4 (HHF1).